The following is a 439-amino-acid chain: Serine hydroxymethyltransferase (439 aa).

Residues leucine 134 and 138–140 (GHL) each bind (6S)-5,6,7,8-tetrahydrofolate. Lysine 243 carries the post-translational modification N6-(pyridoxal phosphate)lysine.

It belongs to the SHMT family. In terms of assembly, homodimer. Requires pyridoxal 5'-phosphate as cofactor.

Its subcellular location is the cytoplasm. The catalysed reaction is (6R)-5,10-methylene-5,6,7,8-tetrahydrofolate + glycine + H2O = (6S)-5,6,7,8-tetrahydrofolate + L-serine. The protein operates within one-carbon metabolism; tetrahydrofolate interconversion. Its pathway is amino-acid biosynthesis; glycine biosynthesis; glycine from L-serine: step 1/1. Functionally, catalyzes the reversible interconversion of serine and glycine with tetrahydrofolate (THF) serving as the one-carbon carrier. This reaction serves as the major source of one-carbon groups required for the biosynthesis of purines, thymidylate, methionine, and other important biomolecules. Also exhibits THF-independent aldolase activity toward beta-hydroxyamino acids, producing glycine and aldehydes, via a retro-aldol mechanism. In Brucella anthropi (strain ATCC 49188 / DSM 6882 / CCUG 24695 / JCM 21032 / LMG 3331 / NBRC 15819 / NCTC 12168 / Alc 37) (Ochrobactrum anthropi), this protein is Serine hydroxymethyltransferase.